The sequence spans 626 residues: Anaphase-promoting complex subunit CDC23 (626 aa).

Ser-59 bears the Phosphoserine; by CDC28 mark. TPR repeat units follow at residues 215–248 (ALLY…YSFN), 295–328 (MIKF…FPNF), 329–362 (TFLK…DPYR), 363–396 (LNDL…DRFR), 397–430 (PETC…DKKT), 431–464 (TNAW…CPRD), 465–498 (FKAW…KPWD), 499–532 (RRIW…SQTV), and 536–569 (TSIY…EELL).

The protein belongs to the APC8/CDC23 family. The APC/C is composed of at least 13 subunits that stay tightly associated throughout the cell cycle: APC1, APC2, APC4, APC5, APC9, APC11, CDC16, CDC23, CDC26, CDC27, DOC1, MND2 and SWM1. CDC23 interacts directly with SWM1 and binds the destruction box (D-box) of the substrate cyclin CLB2. In terms of processing, phosphorylated by CDC28, which is required for the early mitotic activity of the APC/C in its CDC20-bound form.

Its subcellular location is the nucleus. It is found in the chromosome. The protein resides in the centromere. It localises to the kinetochore. It participates in protein modification; protein ubiquitination. Functionally, component of the anaphase promoting complex/cyclosome (APC/C), a cell cycle-regulated E3 ubiquitin-protein ligase complex that controls progression through mitosis and the G1 phase of the cell cycle. The APC/C is thought to confer substrate specificity and, in the presence of ubiquitin-conjugating E2 enzymes, it catalyzes the formation of protein-ubiquitin conjugates that are subsequently degraded by the 26S proteasome. In early mitosis, the APC/C is activated by CDC20 and targets securin PDS1, the B-type cyclin CLB5, and other anaphase inhibitory proteins for proteolysis, thereby triggering the separation of sister chromatids at the metaphase-to-anaphase transition. In late mitosis and in G1, degradation of CLB5 allows activation of the APC/C by CDH1, which is needed to destroy CDC20 and the B-type cyclin CLB2 to allow exit from mitosis and creating the low CDK state necessary for cytokinesis and for reforming prereplicative complexes in G1 prior to another round of replication. The polypeptide is Anaphase-promoting complex subunit CDC23 (CDC23) (Saccharomyces cerevisiae (strain ATCC 204508 / S288c) (Baker's yeast)).